A 317-amino-acid chain; its full sequence is Protease 7 (317 aa).

The first 20 residues, 1-20, serve as a signal peptide directing secretion; the sequence is MRAKLLGIVLTTPIAISSFA. Over 21-31 the chain is Periplasmic; the sequence is STETLSFTPDN. Residues 32–41 form a beta stranded membrane-spanning segment; sequence INADISLGTL. The Extracellular portion of the chain corresponds to 42–69; the sequence is SGKTKERVYLAEEGGRKVSQLDWKFNNA. The chain crosses the membrane as a beta stranded span at residues 70-78; that stretch reads AIIKGAINW. Topologically, residues 79–83 are periplasmic; sequence DLMPQ. A beta stranded transmembrane segment spans residues 84–92; the sequence is ISIGAAGWT. At 93 to 130 the chain is on the extracellular side; the sequence is TLGSRGGNMVDQDWMDSSNPGTWTDESRHPDTQLNYAN. Residues Asp103 and Asp105 contribute to the active site. Residues 131 to 140 traverse the membrane as a beta stranded segment; sequence EFDLNIKGWL. Residues 141 to 145 are Periplasmic-facing; that stretch reads LNEPN. Residues 146-156 form a beta stranded membrane-spanning segment; sequence YRLGLMAGYQE. Topologically, residues 157–197 are extracellular; the sequence is SRYSFTARGGSYIYSSEEGFRDDIGSFPNGERAIGYKQRFK. The chain crosses the membrane as a beta stranded span at residues 198 to 209; it reads MPYIGLTGSYRY. Residues 210–211 lie on the Periplasmic side of the membrane; it reads ED. A beta stranded membrane pass occupies residues 212–221; the sequence is FELGGTFKYS. Topologically, residues 222-250 are extracellular; it reads GWVESSDNDEHYDPGKRITYRSKVKDQNY. Catalysis depends on residues Asp230 and His232. Residues 251 to 261 traverse the membrane as a beta stranded segment; that stretch reads YSVAVNAGYYV. The Periplasmic portion of the chain corresponds to 262–264; sequence TPN. The chain crosses the membrane as a beta stranded span at residues 265–274; that stretch reads AKVYVEGAWN. Residues 275–306 are Extracellular-facing; the sequence is RVTNKKGNTSLYDHNNNTSDYSKNGAGIENYN. The chain crosses the membrane as a beta stranded span at residues 307-316; that stretch reads FITTAGLKYT. A topological domain (periplasmic) is located at residue Phe317.

Belongs to the peptidase A26 family. Homopentamer.

The protein localises to the cell outer membrane. The enzyme catalyses Has a virtual requirement for Arg in the P1 position and a slightly less stringent preference for this residue in the P1' position, which can also contain Lys, Gly or Val.. With respect to regulation, inhibited by zinc. In terms of biological role, protease that can cleave T7 RNA polymerase, ferric enterobactin receptor protein (FEP), antimicrobial peptide protamine and other proteins. This protease has a specificity for paired basic residues. The protein is Protease 7 (ompT) of Escherichia coli (strain K12).